The following is a 750-amino-acid chain: Neprilysin (750 aa).

A compositionally biased stretch (polar residues) spans 1 to 14; that stretch reads MGRSESQMDITDIN. Residues 1-20 form a disordered region; that stretch reads MGRSESQMDITDINTPKPKK. Gly-2 carries N-myristoyl glycine lipidation. Topologically, residues 2 to 28 are cytoplasmic; the sequence is GRSESQMDITDINTPKPKKKQRWTPLE. Ser-4 and Ser-6 each carry phosphoserine. The Stop-transfer sequence motif lies at 16–23; the sequence is PKPKKKQR. Residues 29–51 form a helical; Signal-anchor for type II membrane protein membrane-spanning segment; the sequence is ISLSVLVLLLTVIAVTMIALYAT. At 52 to 750 the chain is on the extracellular side; sequence YDDGICKSSD…MNPEKKCRVW (699 aa). The region spanning 56–750 is the Peptidase M13 domain; that stretch reads ICKSSDCIKS…MNPEKKCRVW (695 aa). Disulfide bonds link Cys-57–Cys-62, Cys-80–Cys-735, Cys-88–Cys-695, Cys-143–Cys-411, Cys-234–Cys-242, and Cys-621–Cys-747. Arg-103 is an a peptide binding site. Residue Asn-145 is glycosylated (N-linked (GlcNAc...) asparagine). 3 N-linked (GlcNAc...) asparagine glycosylation sites follow: Asn-285, Asn-311, and Asn-325. Position 584 (His-584) interacts with Zn(2+). Residue Glu-585 is part of the active site. His-588 is a binding site for Zn(2+). N-linked (GlcNAc...) asparagine glycosylation occurs at Asn-628. Zn(2+) is bound at residue Glu-647. Asp-651 serves as the catalytic Proton donor.

This sequence belongs to the peptidase M13 family. The cofactor is Zn(2+). Myristoylation is a determinant of membrane targeting. Post-translationally, glycosylation at Asn-628 is necessary both for surface expression and neutral endopeptidase activity.

Its subcellular location is the cell membrane. It catalyses the reaction Preferential cleavage of polypeptides between hydrophobic residues, particularly with Phe or Tyr at P1'.. The enzyme catalyses substance P + H2O = substance P(1-9) + L-Leu-L-Met-NH2. It carries out the reaction substance P + H2O = substance P(1-7) + L-Phe-Gly-L-Leu-L-Met-NH2. The catalysed reaction is neurotensin + H2O = neurotensin(1-11) + L-isoleucyl-L-leucine. It catalyses the reaction neurotensin + H2O = neurotensin(1-10) + L-tyrosyl-L-isoleucyl-L-leucine. Its activity is regulated as follows. Inhibited by mixanpril, an orally-active drug used for the treatment of hypertension. Functionally, thermolysin-like specificity, but is almost confined on acting on polypeptides of up to 30 amino acids. Biologically important in the destruction of opioid peptides such as Met- and Leu-enkephalins by cleavage of a Gly-Phe bond. Catalyzes cleavage of bradykinin, substance P and neurotensin peptides. Able to cleave angiotensin-1, angiotensin-2 and angiotensin 1-9. Involved in the degradation of atrial natriuretic factor (ANF) and brain natriuretic factor (BNP(1-32)). Displays UV-inducible elastase activity toward skin preelastic and elastic fibers. This chain is Neprilysin (MME), found in Oryctolagus cuniculus (Rabbit).